Here is a 469-residue protein sequence, read N- to C-terminus: ATP synthase subunit beta (469 aa).

156–163 (GGAGVGKT) is a binding site for ATP.

This sequence belongs to the ATPase alpha/beta chains family. In terms of assembly, F-type ATPases have 2 components, CF(1) - the catalytic core - and CF(0) - the membrane proton channel. CF(1) has five subunits: alpha(3), beta(3), gamma(1), delta(1), epsilon(1). CF(0) has three main subunits: a(1), b(2) and c(9-12). The alpha and beta chains form an alternating ring which encloses part of the gamma chain. CF(1) is attached to CF(0) by a central stalk formed by the gamma and epsilon chains, while a peripheral stalk is formed by the delta and b chains.

The protein resides in the cell membrane. The enzyme catalyses ATP + H2O + 4 H(+)(in) = ADP + phosphate + 5 H(+)(out). Its function is as follows. Produces ATP from ADP in the presence of a proton gradient across the membrane. The catalytic sites are hosted primarily by the beta subunits. This Lactococcus lactis subsp. lactis (strain IL1403) (Streptococcus lactis) protein is ATP synthase subunit beta.